We begin with the raw amino-acid sequence, 700 residues long: Acyl-coenzyme A oxidase 3 (700 aa).

It belongs to the acyl-CoA oxidase family. As to quaternary structure, heteropentamer composed of five different subunits. The cofactor is FAD.

The protein localises to the peroxisome. It carries out the reaction a 2,3-saturated acyl-CoA + O2 = a (2E)-enoyl-CoA + H2O2. It functions in the pathway lipid metabolism; peroxisomal fatty acid beta-oxidation. In terms of biological role, oxidizes aliphatic acyl-CoA substrates of different chain lengths such as hexanoyl-CoA, decanoyl-CoA and myristoyl-CoA as well as aromatic/heterocyclic ring-substituted chromogenic substrates, such as furylpropionyl-CoA. Of the above substrates, the efficiency of the enzyme, exhibits the following order: decanoyl-CoA &gt; myristoyl-CoA &gt; hexanoyl-CoA &gt; furyl-propionyl-CoA. This chain is Acyl-coenzyme A oxidase 3 (POX3), found in Yarrowia lipolytica (strain CLIB 122 / E 150) (Yeast).